The chain runs to 326 residues: Putative ABC transporter ATP-binding protein MA_4020 (326 aa).

Positions 1–12 are enriched in polar residues; that stretch reads MTISTLSSSYGN. The interval 1 to 34 is disordered; that stretch reads MTISTLSSSYGNAQDVPAEDSDRHGSIEPGSEKA. One can recognise an ABC transporter domain in the interval 46 to 281; it reads LEVKNLCHRY…PELLRKAHLR (236 aa). 80-87 lines the ATP pocket; the sequence is GANGAGKS.

It belongs to the ABC transporter superfamily.

Its subcellular location is the cell membrane. Its function is as follows. Probably part of an ABC transporter complex. Responsible for energy coupling to the transport system. This Methanosarcina acetivorans (strain ATCC 35395 / DSM 2834 / JCM 12185 / C2A) protein is Putative ABC transporter ATP-binding protein MA_4020.